We begin with the raw amino-acid sequence, 757 residues long: Polyribonucleotide nucleotidyltransferase (757 aa).

Residues aspartate 489 and aspartate 495 each contribute to the Mg(2+) site. In terms of domain architecture, KH spans 556-615; the sequence is PKILCYKIDKDVVHKVIGSGGKTIRGISSDTSAKIDIDQNNYVYIMADTEEALMEAKTRV. The 69-residue stretch at 632 to 700 folds into the S1 motif domain; it reads GELYDGKIVS…SDGKIKLTMR (69 aa). The segment at 702-757 is disordered; sequence DEDRVGSGGSSSSPKKRFGAHPRKNGKDNRSNNSERGFNERSGSAEGSSISRKRFF. Positions 715 to 725 are enriched in basic residues; that stretch reads PKKRFGAHPRK. Over residues 732 to 751 the composition is skewed to polar residues; that stretch reads SNNSERGFNERSGSAEGSSI.

The protein belongs to the polyribonucleotide nucleotidyltransferase family. It depends on Mg(2+) as a cofactor.

It is found in the cytoplasm. The catalysed reaction is RNA(n+1) + phosphate = RNA(n) + a ribonucleoside 5'-diphosphate. Its function is as follows. Involved in mRNA degradation. Catalyzes the phosphorolysis of single-stranded polyribonucleotides processively in the 3'- to 5'-direction. The chain is Polyribonucleotide nucleotidyltransferase from Neorickettsia sennetsu (strain ATCC VR-367 / Miyayama) (Ehrlichia sennetsu).